A 245-amino-acid chain; its full sequence is Biosynthetic peptidoglycan transglycosylase (245 aa).

A helical transmembrane segment spans residues L24–F44.

This sequence belongs to the glycosyltransferase 51 family.

The protein localises to the cell inner membrane. It catalyses the reaction [GlcNAc-(1-&gt;4)-Mur2Ac(oyl-L-Ala-gamma-D-Glu-L-Lys-D-Ala-D-Ala)](n)-di-trans,octa-cis-undecaprenyl diphosphate + beta-D-GlcNAc-(1-&gt;4)-Mur2Ac(oyl-L-Ala-gamma-D-Glu-L-Lys-D-Ala-D-Ala)-di-trans,octa-cis-undecaprenyl diphosphate = [GlcNAc-(1-&gt;4)-Mur2Ac(oyl-L-Ala-gamma-D-Glu-L-Lys-D-Ala-D-Ala)](n+1)-di-trans,octa-cis-undecaprenyl diphosphate + di-trans,octa-cis-undecaprenyl diphosphate + H(+). The protein operates within cell wall biogenesis; peptidoglycan biosynthesis. Functionally, peptidoglycan polymerase that catalyzes glycan chain elongation from lipid-linked precursors. In Pectobacterium atrosepticum (strain SCRI 1043 / ATCC BAA-672) (Erwinia carotovora subsp. atroseptica), this protein is Biosynthetic peptidoglycan transglycosylase.